Consider the following 423-residue polypeptide: Diaminobutyrate--2-oxoglutarate transaminase (423 aa).

N6-(pyridoxal phosphate)lysine is present on lysine 267.

It belongs to the class-III pyridoxal-phosphate-dependent aminotransferase family. Homohexamer. It depends on pyridoxal 5'-phosphate as a cofactor.

It carries out the reaction L-2,4-diaminobutanoate + 2-oxoglutarate = L-aspartate 4-semialdehyde + L-glutamate. It functions in the pathway amine and polyamine biosynthesis; ectoine biosynthesis; L-ectoine from L-aspartate 4-semialdehyde: step 1/3. In terms of biological role, catalyzes reversively the conversion of L-aspartate beta-semialdehyde (ASA) to L-2,4-diaminobutyrate (DABA) by transamination with L-glutamate. In Chromohalobacter salexigens (strain ATCC BAA-138 / DSM 3043 / CIP 106854 / NCIMB 13768 / 1H11), this protein is Diaminobutyrate--2-oxoglutarate transaminase (ectB).